We begin with the raw amino-acid sequence, 319 residues long: Cell surface A33 antigen (319 aa).

The N-terminal stretch at 1–21 is a signal peptide; the sequence is MLGKAGSVVWMLCAIWVAADA. The Ig-like V-type domain maps to 22 to 134; it reads LTVETTQDIL…QDVNAKSRVR (113 aa). Topologically, residues 22 to 235 are extracellular; that stretch reads LTVETTQDIL…VAPRPPSMNI (214 aa). 3 cysteine pairs are disulfide-bonded: C43–C117, C146–C222, and C162–C211. N-linked (GlcNAc...) asparagine glycans are attached at residues N99, N112, N200, and N223. The 88-residue stretch at 140–227 folds into the Ig-like C2-type domain; the sequence is PPSKPDCSIQ…GIESCNITVA (88 aa). Residues 236–256 form a helical membrane-spanning segment; it reads ALYAGIAGGVFVALIIIGVIV. The Cytoplasmic segment spans residues 257–319; the sequence is YCCCCREKDD…GRSTPDQPFQ (63 aa). Basic and acidic residues-rich tracts occupy residues 267-276 and 284-308; these read KDQDREDARP and PKKE…DRWS. The segment at 267-319 is disordered; that stretch reads KDQDREDARPNRAAYQVPKKEQKEISRGREDEDDHRHEDRWSSGRSTPDQPFQ. Positions 309–319 are enriched in polar residues; that stretch reads SGRSTPDQPFQ.

In terms of processing, palmitoylated.

It localises to the membrane. In terms of biological role, may play a role in cell-cell recognition and signaling. This is Cell surface A33 antigen (Gpa33) from Mus musculus (Mouse).